Reading from the N-terminus, the 818-residue chain is Response regulator SSK1 (818 aa).

The Response regulatory domain occupies 611 to 769; sequence NVLIVEDNPI…WLERKVMEWG (159 aa). 4-aspartylphosphate is present on Asp-660.

The protein belongs to the SSK1 family.

It is found in the cytoplasm. Two-domain response regulator protein in the two-component signal transduction system of the HOG1 pathway. Modulates stress response, melanin biosynthesis and virulence via its regulation of the phosphorylation of HOG1. This Verticillium dahliae (strain VdLs.17 / ATCC MYA-4575 / FGSC 10137) (Verticillium wilt) protein is Response regulator SSK1.